The following is a 114-amino-acid chain: Ig kappa chain V region AH80-5 (114 aa).

The interval 1 to 22 (IVMTQTPSSKSVPVGDTVTINC) is framework-1. The tract at residues 23 to 35 (QAAQSVYSNNRLS) is complementarity-determining-1. Residues 36-50 (WFQQKPGQPPKGLIY) form a framework-2 region. A complementarity-determining-2 region spans residues 51 to 57 (YASTLAS). The tract at residues 58-93 (GVQQDPSRFKGSGSGTQFTLTISDVQCBBAATVYYC) is framework-3. A complementarity-determining-3 region spans residues 94–103 (QGYKSSDTRA). The framework-4 stretch occupies residues 104-113 (FGGGTEVVVK).

This Oryctolagus cuniculus (Rabbit) protein is Ig kappa chain V region AH80-5.